A 519-amino-acid chain; its full sequence is Cytochrome P450 709B1 (519 aa).

A helical membrane pass occupies residues 1-21; that stretch reads MGLVIFLALIVLILIIGLRIF. Cysteine 464 is a heme binding site.

This sequence belongs to the cytochrome P450 family. It depends on heme as a cofactor. As to expression, highly expressed in siliques.

Its subcellular location is the membrane. Its function is as follows. Involved in stress response. Does not function as cytokinin hydroxylase in yeast heterologous system. In Arabidopsis thaliana (Mouse-ear cress), this protein is Cytochrome P450 709B1.